The following is a 256-amino-acid chain: Pimeloyl-[acyl-carrier protein] methyl ester esterase (256 aa).

The 225-residue stretch at 17-241 (VYLIHGWGAN…KAAHAPFLSH (225 aa)) folds into the AB hydrolase-1 domain. Residues Trp23, 83-84 (SL), and 145-149 (FLQLQ) each bind substrate. Catalysis depends on Ser83, which acts as the Nucleophile. Residues Asp207 and His235 contribute to the active site. Substrate is bound at residue His235.

The protein belongs to the AB hydrolase superfamily. Carboxylesterase BioH family. Monomer.

The protein resides in the cytoplasm. It carries out the reaction 6-carboxyhexanoyl-[ACP] methyl ester + H2O = 6-carboxyhexanoyl-[ACP] + methanol + H(+). The protein operates within cofactor biosynthesis; biotin biosynthesis. In terms of biological role, the physiological role of BioH is to remove the methyl group introduced by BioC when the pimeloyl moiety is complete. It allows to synthesize pimeloyl-ACP via the fatty acid synthetic pathway through the hydrolysis of the ester bonds of pimeloyl-ACP esters. This is Pimeloyl-[acyl-carrier protein] methyl ester esterase from Neisseria meningitidis serogroup C / serotype 2a (strain ATCC 700532 / DSM 15464 / FAM18).